The chain runs to 173 residues: Translation initiation factor IF-3 (173 aa).

This sequence belongs to the IF-3 family. As to quaternary structure, monomer.

Its subcellular location is the cytoplasm. In terms of biological role, IF-3 binds to the 30S ribosomal subunit and shifts the equilibrium between 70S ribosomes and their 50S and 30S subunits in favor of the free subunits, thus enhancing the availability of 30S subunits on which protein synthesis initiation begins. In Caulobacter sp. (strain K31), this protein is Translation initiation factor IF-3.